The chain runs to 480 residues: Aspartyl/glutamyl-tRNA(Asn/Gln) amidotransferase subunit B (480 aa).

Belongs to the GatB/GatE family. GatB subfamily. In terms of assembly, heterotrimer of A, B and C subunits.

The enzyme catalyses L-glutamyl-tRNA(Gln) + L-glutamine + ATP + H2O = L-glutaminyl-tRNA(Gln) + L-glutamate + ADP + phosphate + H(+). It carries out the reaction L-aspartyl-tRNA(Asn) + L-glutamine + ATP + H2O = L-asparaginyl-tRNA(Asn) + L-glutamate + ADP + phosphate + 2 H(+). Allows the formation of correctly charged Asn-tRNA(Asn) or Gln-tRNA(Gln) through the transamidation of misacylated Asp-tRNA(Asn) or Glu-tRNA(Gln) in organisms which lack either or both of asparaginyl-tRNA or glutaminyl-tRNA synthetases. The reaction takes place in the presence of glutamine and ATP through an activated phospho-Asp-tRNA(Asn) or phospho-Glu-tRNA(Gln). The protein is Aspartyl/glutamyl-tRNA(Asn/Gln) amidotransferase subunit B of Streptococcus pneumoniae serotype 19F (strain G54).